The sequence spans 603 residues: Myotubularin (603 aa).

Polar residues predominate over residues M1–S13. Residues M1–G32 form a disordered region. 2 positions are modified to phosphoserine: S13 and S18. The segment covering L14 to G32 has biased composition (basic and acidic residues). One can recognise a GRAM domain in the interval R29–G97. Positions G163–Y538 constitute a Myotubularin phosphatase domain. Residues N288, N313, and I314 each contribute to the a 1,2-diacyl-sn-glycero-3-phospho-(1D-myo-inositol-3,5-bisphosphate) site. The a 1,2-diacyl-sn-glycero-3-phospho-(1D-myo-inositol-3-phosphate) site is built by N288, N313, and I314. C375 functions as the Phosphocysteine intermediate in the catalytic mechanism. A 1,2-diacyl-sn-glycero-3-phospho-(1D-myo-inositol-3,5-bisphosphate) contacts are provided by S376, D377, G378, W379, D380, R381, K417, and R421. Positions 376, 377, 378, 379, 380, and 381 each coordinate a 1,2-diacyl-sn-glycero-3-phospho-(1D-myo-inositol-3-phosphate). A 1,2-diacyl-sn-glycero-3-phospho-(1D-myo-inositol-3-phosphate) is bound at residue R421. T495 is subject to Phosphothreonine. The interval A580–F603 is disordered. The segment covering S583–S593 has biased composition (low complexity). S588 is modified (phosphoserine).

The protein belongs to the protein-tyrosine phosphatase family. Non-receptor class myotubularin subfamily. In terms of assembly, heterodimer with MTMR12. Interacts with KMT2A/MLL1 (via SET domain). Interacts with DES in skeletal muscle but not in cardiac muscle. Interacts with SPEG.

The protein resides in the cytoplasm. The protein localises to the cell membrane. It is found in the cell projection. It localises to the filopodium. Its subcellular location is the ruffle. The protein resides in the late endosome. The protein localises to the myofibril. It is found in the sarcomere. It carries out the reaction a 1,2-diacyl-sn-glycero-3-phospho-(1D-myo-inositol-3-phosphate) + H2O = a 1,2-diacyl-sn-glycero-3-phospho-(1D-myo-inositol) + phosphate. The enzyme catalyses a 1,2-diacyl-sn-glycero-3-phospho-(1D-myo-inositol-3,5-bisphosphate) + H2O = a 1,2-diacyl-sn-glycero-3-phospho-(1D-myo-inositol-5-phosphate) + phosphate. It catalyses the reaction 1,2-dioctanoyl-sn-glycero-3-phospho-(1-D-myo-inositol-3-phosphate) + H2O = 1,2-dioctanoyl-sn-glycero-3-phospho-(1D-myo-inositol) + phosphate. The catalysed reaction is 1,2-dioctanoyl-sn-glycero-3-phospho-(1D-myo-inositol-3,5-bisphosphate) + H2O = 1,2-dioctanoyl-sn-glycero-3-phospho-(1D-myo-inositol-5-phosphate) + phosphate. It carries out the reaction 1,2-dihexadecanoyl-sn-glycero-3-phospho-(1D-myo-inositol-3,5-phosphate) + H2O = 1,2-dihexadecanoyl-sn-glycero-3-phospho-(1D-myo-inositol-5-phosphate) + phosphate. With respect to regulation, allosterically activated by phosphatidylinositol 5-phosphate (PI5P). Functionally, lipid phosphatase which dephosphorylates phosphatidylinositol 3-monophosphate (PI3P) and phosphatidylinositol 3,5-bisphosphate (PI(3,5)P2). Has also been shown to dephosphorylate phosphotyrosine- and phosphoserine-containing peptides. Negatively regulates EGFR degradation through regulation of EGFR trafficking from the late endosome to the lysosome. Plays a role in vacuolar formation and morphology. Regulates desmin intermediate filament assembly and architecture. Plays a role in mitochondrial morphology and positioning. Required for skeletal muscle maintenance but not for myogenesis. In skeletal muscles, stabilizes MTMR12 protein levels. The polypeptide is Myotubularin (Bos taurus (Bovine)).